The primary structure comprises 390 residues: tRNA-specific 2-thiouridylase MnmA (390 aa).

ATP-binding positions include 29–36 (GLSGGVDS) and Leu-55. Cys-116 acts as the Nucleophile in catalysis. Cys-116 and Cys-225 are disulfide-bonded. Residue Gly-141 coordinates ATP. The interval 175 to 177 (KDQ) is interaction with tRNA. Cys-225 serves as the catalytic Cysteine persulfide intermediate. The interval 330 to 331 (RY) is interaction with tRNA.

It belongs to the MnmA/TRMU family.

Its subcellular location is the cytoplasm. It carries out the reaction S-sulfanyl-L-cysteinyl-[protein] + uridine(34) in tRNA + AH2 + ATP = 2-thiouridine(34) in tRNA + L-cysteinyl-[protein] + A + AMP + diphosphate + H(+). Catalyzes the 2-thiolation of uridine at the wobble position (U34) of tRNA, leading to the formation of s(2)U34. This Prochlorococcus marinus (strain MIT 9515) protein is tRNA-specific 2-thiouridylase MnmA.